A 372-amino-acid polypeptide reads, in one-letter code: Actin-related protein 2/3 complex subunit 1B (372 aa).

WD repeat units lie at residues 6–45, 50–89, 94–135, 140–179, 242–280, and 324–367; these read FLVE…WTKV, EHNG…WKPT, RINR…WVCK, PIRS…VEER, SETL…GMLS, and LHKN…SALK.

It belongs to the WD repeat ARPC1 family. As to quaternary structure, component of the Arp2/3 complex composed of ACTR2/ARP2, ACTR3/ARP3, ARPC1B/p41-ARC, ARPC2/p34-ARC, ARPC3/p21-ARC, ARPC4/p20-ARC and ARPC5/p16-ARC.

The protein resides in the cytoplasm. Its subcellular location is the cytoskeleton. It localises to the nucleus. Component of the Arp2/3 complex, a multiprotein complex that mediates actin polymerization upon stimulation by nucleation-promoting factor (NPF). The Arp2/3 complex mediates the formation of branched actin networks in the cytoplasm, providing the force for cell motility. In addition to its role in the cytoplasmic cytoskeleton, the Arp2/3 complex also promotes actin polymerization in the nucleus, thereby regulating gene transcription and repair of damaged DNA. The Arp2/3 complex promotes homologous recombination (HR) repair in response to DNA damage by promoting nuclear actin polymerization, leading to drive motility of double-strand breaks (DSBs). The sequence is that of Actin-related protein 2/3 complex subunit 1B from Homo sapiens (Human).